A 137-amino-acid chain; its full sequence is Thionin BTH7 (137 aa).

The N-terminal stretch at 1–28 (MATNKSIKSVVICVLILGLVLEQVQVEG) is a signal peptide. 4 disulfides stabilise this stretch: C31–C68, C32–C60, C40–C58, and C44–C54. Residues 75–137 (LNLLPESGEP…DGEVIQSVEA (63 aa)) constitute a propeptide, acidic domain.

Belongs to the plant thionin (TC 1.C.44) family. 4 C-C subfamily.

The protein resides in the secreted. Its function is as follows. Thionins are small plant proteins which are toxic to animal cells. They seem to exert their toxic effect at the level of the cell membrane. Their precise function is not known. This chain is Thionin BTH7, found in Hordeum vulgare (Barley).